Here is a 31-residue protein sequence, read N- to C-terminus: Photosystem II reaction center protein T (31 aa).

The chain crosses the membrane as a helical span at residues A3–F23.

This sequence belongs to the PsbT family. In terms of assembly, PSII is composed of 1 copy each of membrane proteins PsbA, PsbB, PsbC, PsbD, PsbE, PsbF, PsbH, PsbI, PsbJ, PsbK, PsbL, PsbM, PsbT, PsbY, PsbZ, Psb30/Ycf12, at least 3 peripheral proteins of the oxygen-evolving complex and a large number of cofactors. It forms dimeric complexes.

Its subcellular location is the plastid. It is found in the chloroplast thylakoid membrane. Found at the monomer-monomer interface of the photosystem II (PS II) dimer, plays a role in assembly and dimerization of PSII. PSII is a light-driven water plastoquinone oxidoreductase, using light energy to abstract electrons from H(2)O, generating a proton gradient subsequently used for ATP formation. The protein is Photosystem II reaction center protein T of Nephroselmis olivacea (Green alga).